The following is a 315-amino-acid chain: Methionyl-tRNA formyltransferase (315 aa).

A (6S)-5,6,7,8-tetrahydrofolate-binding site is contributed by 113–116 (SLLP).

This sequence belongs to the Fmt family.

It carries out the reaction L-methionyl-tRNA(fMet) + (6R)-10-formyltetrahydrofolate = N-formyl-L-methionyl-tRNA(fMet) + (6S)-5,6,7,8-tetrahydrofolate + H(+). Attaches a formyl group to the free amino group of methionyl-tRNA(fMet). The formyl group appears to play a dual role in the initiator identity of N-formylmethionyl-tRNA by promoting its recognition by IF2 and preventing the misappropriation of this tRNA by the elongation apparatus. This Escherichia coli O6:K15:H31 (strain 536 / UPEC) protein is Methionyl-tRNA formyltransferase.